The following is a 179-amino-acid chain: Large ribosomal subunit protein uL5 (179 aa).

This sequence belongs to the universal ribosomal protein uL5 family. Part of the 50S ribosomal subunit; part of the 5S rRNA/L5/L18/L25 subcomplex. Contacts the 5S rRNA and the P site tRNA. Forms a bridge to the 30S subunit in the 70S ribosome.

In terms of biological role, this is one of the proteins that bind and probably mediate the attachment of the 5S RNA into the large ribosomal subunit, where it forms part of the central protuberance. In the 70S ribosome it contacts protein S13 of the 30S subunit (bridge B1b), connecting the 2 subunits; this bridge is implicated in subunit movement. Contacts the P site tRNA; the 5S rRNA and some of its associated proteins might help stabilize positioning of ribosome-bound tRNAs. This Deinococcus geothermalis (strain DSM 11300 / CIP 105573 / AG-3a) protein is Large ribosomal subunit protein uL5.